Here is a 210-residue protein sequence, read N- to C-terminus: Somatotropin (210 aa).

A signal peptide spans 1–22; sequence MGQVFLLMPVLLVSCFLSQGAA. H38 contacts Zn(2+). Cysteines 71 and 183 form a disulfide. E192 contributes to the Zn(2+) binding site. C200 and C208 form a disulfide bridge.

Belongs to the somatotropin/prolactin family.

The protein localises to the secreted. Growth hormone plays an important role in growth control and is involved in the regulation of several anabolic processes. Implicated as an osmoregulatory substance important for seawater adaptation. The sequence is that of Somatotropin (gh) from Oncorhynchus tshawytscha (Chinook salmon).